A 226-amino-acid polypeptide reads, in one-letter code: Ribonuclease 3 (226 aa).

Residues 6 to 128 enclose the RNase III domain; that stretch reads INRLQRKLGY…LIGGVFLDSN (123 aa). Glu-41 serves as a coordination point for Mg(2+). Residue Asp-45 is part of the active site. The Mg(2+) site is built by Asp-114 and Glu-117. The active site involves Glu-117. In terms of domain architecture, DRBM spans 155–225; the sequence is DPKTRLQEYL…AEQVLKKLEL (71 aa).

It belongs to the ribonuclease III family. Homodimer. Mg(2+) is required as a cofactor.

It is found in the cytoplasm. The catalysed reaction is Endonucleolytic cleavage to 5'-phosphomonoester.. In terms of biological role, digests double-stranded RNA. Involved in the processing of primary rRNA transcript to yield the immediate precursors to the large and small rRNAs (23S and 16S). Processes some mRNAs, and tRNAs when they are encoded in the rRNA operon. Processes pre-crRNA and tracrRNA of type II CRISPR loci if present in the organism. In Salmonella choleraesuis (strain SC-B67), this protein is Ribonuclease 3.